Consider the following 163-residue polypeptide: DNA endonuclease I-CreI (163 aa).

Glycine 19 and aspartate 20 together coordinate Mg(2+). 4 interaction with DNA regions span residues 26–38, 44–47, 68–70, and 138–143; these read QIKP…FKHQ, QVTQ, RDR, and SKTRKT.

Belongs to the LAGLIDADG endonuclease family. As to quaternary structure, homodimer. It depends on Mg(2+) as a cofactor. Mn(2+) is required as a cofactor. Requires Co(2+) as cofactor. Ni(2+) serves as cofactor. The cofactor is Zn(2+).

The protein localises to the plastid. Its subcellular location is the chloroplast. Its function is as follows. Endonuclease involved in group I intron homing. Recognizes and cleaves a 19-24 bp palindromic DNA site. This is DNA endonuclease I-CreI from Chlamydomonas reinhardtii (Chlamydomonas smithii).